We begin with the raw amino-acid sequence, 267 residues long: Glucosamine-6-phosphate deaminase (267 aa).

D72 (proton acceptor; for enolization step) is an active-site residue. Residue D141 is the For ring-opening step of the active site. Residue H143 is the Proton acceptor; for ring-opening step of the active site. Catalysis depends on E148, which acts as the For ring-opening step.

This sequence belongs to the glucosamine/galactosamine-6-phosphate isomerase family. NagB subfamily. As to quaternary structure, homohexamer.

The catalysed reaction is alpha-D-glucosamine 6-phosphate + H2O = beta-D-fructose 6-phosphate + NH4(+). It functions in the pathway amino-sugar metabolism; N-acetylneuraminate degradation; D-fructose 6-phosphate from N-acetylneuraminate: step 5/5. Its activity is regulated as follows. Allosterically activated by N-acetylglucosamine 6-phosphate (GlcNAc6P). Functionally, catalyzes the reversible isomerization-deamination of glucosamine 6-phosphate (GlcN6P) to form fructose 6-phosphate (Fru6P) and ammonium ion. This is Glucosamine-6-phosphate deaminase from Haemophilus ducreyi (strain 35000HP / ATCC 700724).